We begin with the raw amino-acid sequence, 179 residues long: Large ribosomal subunit protein uL6 (179 aa).

The protein belongs to the universal ribosomal protein uL6 family. As to quaternary structure, part of the 50S ribosomal subunit.

Functionally, this protein binds to the 23S rRNA, and is important in its secondary structure. It is located near the subunit interface in the base of the L7/L12 stalk, and near the tRNA binding site of the peptidyltransferase center. This is Large ribosomal subunit protein uL6 from Spiroplasma kunkelii.